Here is a 37-residue protein sequence, read N- to C-terminus: Large ribosomal subunit protein bL36 (37 aa).

It belongs to the bacterial ribosomal protein bL36 family.

In Salinispora tropica (strain ATCC BAA-916 / DSM 44818 / JCM 13857 / NBRC 105044 / CNB-440), this protein is Large ribosomal subunit protein bL36.